The primary structure comprises 126 residues: Small ribosomal subunit protein uS13 (126 aa).

Residues 101-126 (QKTKNNCRTRKGKKKTVANKKKKINK) form a disordered region.

Belongs to the universal ribosomal protein uS13 family. Part of the 30S ribosomal subunit. Forms a loose heterodimer with protein S19. Forms two bridges to the 50S subunit in the 70S ribosome.

Functionally, located at the top of the head of the 30S subunit, it contacts several helices of the 16S rRNA. In the 70S ribosome it contacts the 23S rRNA (bridge B1a) and protein L5 of the 50S subunit (bridge B1b), connecting the 2 subunits; these bridges are implicated in subunit movement. Contacts the tRNAs in the A and P-sites. In Karelsulcia muelleri (strain GWSS) (Sulcia muelleri), this protein is Small ribosomal subunit protein uS13.